Here is a 154-residue protein sequence, read N- to C-terminus: Catabolic 3-dehydroquinase (154 aa).

Tyr25 serves as the catalytic Proton acceptor. Substrate-binding residues include Asn79, His85, and Asp92. The active-site Proton donor is the His105. Substrate contacts are provided by residues Ile106–Ser107 and Arg116.

Belongs to the type-II 3-dehydroquinase family. In terms of assembly, homododecamer. Adopts a ring-like structure, composed of an arrangement of two hexameric rings stacked on top of one another.

It catalyses the reaction 3-dehydroquinate = 3-dehydroshikimate + H2O. The protein operates within aromatic compound metabolism; 3,4-dihydroxybenzoate biosynthesis; 3,4-dihydroxybenzoate from 3-dehydroquinate: step 1/2. Functionally, is involved in the catabolism of quinate. Allows the utilization of quinate as carbon source via the beta-ketoadipate pathway. This Sclerotinia sclerotiorum (strain ATCC 18683 / 1980 / Ss-1) (White mold) protein is Catabolic 3-dehydroquinase.